We begin with the raw amino-acid sequence, 893 residues long: Phosphatidate phosphatase LPIN2 (893 aa).

Residues 1–108 form an N-LIP region; it reads MNYVGQLAGQ…LPAYLATSPI (108 aa). Position 106 is a phosphoserine (S106). Positions 122-216 are disordered; it reads LVKSSGNERP…EDYKEPSLFH (95 aa). Over residues 123–151 the composition is skewed to polar residues; sequence VKSSGNERPAQSSDVSHTLESEAVFTQSS. Residues 152–162 are compositionally biased toward basic residues; the sequence is VKKKKRRRKKC. A Nuclear localization signal motif is present at residues 153–158; it reads KKKKRR. A phosphoserine mark is found at S174, S186, and S187. Positions 204–213 are enriched in basic and acidic residues; that stretch reads LKEEDYKEPS. S243 and S303 each carry phosphoserine. 2 disordered regions span residues 357–400 and 417–456; these read LLDA…PDDI and FPKS…TECL. The span at 360 to 371 shows a compositional bias: low complexity; the sequence is ADPVPSPSAEAP. A compositionally biased stretch (basic residues) spans 384 to 393; the sequence is KKKGVHKRSQ. Residues 423–445 show a composition bias toward polar residues; that stretch reads DPGSRQWPESDTFSGSQSPQSVG. S563 carries the post-translational modification Phosphoserine. Residues 568–611 are disordered; sequence LPETKEGKSEVPPANDLPSNAEEPTSARPAENDTSSDEGSQELE. Over residues 601-611 the composition is skewed to acidic residues; the sequence is TSSDEGSQELE. Residues 632–834 are C-LIP; the sequence is YKKSLRLSSD…RIFTVNPKGE (203 aa). Residues 686–690 carry the DXDXT motif motif; it reads DIDGT. An LXXIL motif motif is present at residues 697-701; sequence LGQIL.

The protein belongs to the lipin family. Requires Mg(2+) as cofactor. In terms of tissue distribution, expressed at high level in liver and to some extend in lung, kidney, placenta, spleen, thymus, lymph node, prostate, testes, small intestine, and colon. Expressed also in circulating red blood cells and site of lymphopoiesis.

It is found in the nucleus. It localises to the cytoplasm. Its subcellular location is the cytosol. The protein resides in the endoplasmic reticulum membrane. The catalysed reaction is a 1,2-diacyl-sn-glycero-3-phosphate + H2O = a 1,2-diacyl-sn-glycerol + phosphate. Its activity is regulated as follows. Inhibited by N-ethylmaleimide. In terms of biological role, acts as a magnesium-dependent phosphatidate phosphatase enzyme which catalyzes the conversion of phosphatidic acid to diacylglycerol during triglyceride, phosphatidylcholine and phosphatidylethanolamine biosynthesis in the endoplasmic reticulum membrane. Plays important roles in controlling the metabolism of fatty acids at different levels. Also acts as a nuclear transcriptional coactivator for PPARGC1A to modulate lipid metabolism. The protein is Phosphatidate phosphatase LPIN2 of Mus musculus (Mouse).